Reading from the N-terminus, the 145-residue chain is Aminoglycoside N(6')-acetyltransferase type 1 (145 aa).

One can recognise an N-acetyltransferase domain in the interval 1–145; that stretch reads MNIKPASEAS…KVVYFSKKID (145 aa). Substrate contacts are provided by Trp-22, Tyr-65, and Glu-78. 80 to 82 lines the acetyl-CoA pocket; that stretch reads IYV. Asp-114 is a binding site for substrate. An acetyl-CoA-binding site is contributed by Asn-119. Glu-135 contacts substrate.

Homodimer.

The enzyme catalyses kanamycin B + acetyl-CoA = N(6')-acetylkanamycin B + CoA + H(+). Its function is as follows. Catalyzes the transfer of an acetyl group from acetyl-CoA to the 6'-amino group of aminoglycoside molecules conferring resistance to antibiotics containing the purpurosamine ring including amikacin, kanamycin, tobramycin and netilmicin. The protein is Aminoglycoside N(6')-acetyltransferase type 1 of Acinetobacter haemolyticus.